A 148-amino-acid chain; its full sequence is MTLFIDGDAFPNLLKPIVLRSIERLALPTKVIANKKINIGRSSHIEYIIVDQGADEADHRIVDLCQKDDLVITADIPLADRIISKEGHAIDHRGELYSIENIKQYLAMRNLMESIRESGEMTGGPKAFGPKDAHAFANQFNAFLAKNC.

The protein belongs to the UPF0178 family.

In Sulfurovum sp. (strain NBC37-1), this protein is UPF0178 protein SUN_1096.